We begin with the raw amino-acid sequence, 804 residues long: Ion-translocating oxidoreductase complex subunit C (804 aa).

2 4Fe-4S ferredoxin-type domains span residues 366–397 (SEMG…QQLY) and 407–436 (KARA…VQYY). Residues cysteine 377, cysteine 380, cysteine 383, cysteine 387, cysteine 416, cysteine 419, cysteine 422, and cysteine 426 each coordinate [4Fe-4S] cluster. Disordered stretches follow at residues 466-532 (RLER…EVRV) and 567-804 (KAAQ…MQED). Composition is skewed to low complexity over residues 484 to 495 (SVASSDAGAIAA), 567 to 582 (KAAQ…APQQ), 592 to 619 (AAVA…EAPQ), 629 to 660 (KAAV…QQSA), 668 to 693 (AAVA…ATEA), 706 to 731 (AAVA…ATEA), and 744 to 769 (AAVA…ATEA).

Belongs to the 4Fe4S bacterial-type ferredoxin family. RnfC subfamily. The complex is composed of six subunits: RnfA, RnfB, RnfC, RnfD, RnfE and RnfG. Requires [4Fe-4S] cluster as cofactor.

The protein localises to the cell inner membrane. Its function is as follows. Part of a membrane-bound complex that couples electron transfer with translocation of ions across the membrane. The sequence is that of Ion-translocating oxidoreductase complex subunit C from Erwinia tasmaniensis (strain DSM 17950 / CFBP 7177 / CIP 109463 / NCPPB 4357 / Et1/99).